A 564-amino-acid polypeptide reads, in one-letter code: Sphingomyelin phosphodiesterase 1 (564 aa).

A signal peptide spans 1 to 17 (MRIIYLISTVLLIYTNA). The 85-residue stretch at 37-121 (FQPLCISCTG…IILPDCADPT (85 aa)) folds into the Saposin B-type domain. Disulfide bonds link Cys-41-Cys-117, Cys-44-Cys-110, and Cys-72-Cys-83. Asn-151 is a glycosylation site (N-linked (GlcNAc...) asparagine). Positions 165 and 167 each coordinate Zn(2+). Disulfide bonds link Cys-180/Cys-185 and Cys-186/Cys-206. N-linked (GlcNAc...) asparagine glycosylation is present at Asn-221. Residues Asp-234 and Asn-274 each coordinate Zn(2+). A disulfide bridge links Cys-341 with Cys-389. An N-linked (GlcNAc...) asparagine glycan is attached at Asn-351. Positions 381, 415, and 417 each coordinate Zn(2+). N-linked (GlcNAc...) asparagine glycosylation is present at Asn-430. 2 disulfide bridges follow: Cys-538-Cys-542 and Cys-548-Cys-561. A glycan (N-linked (GlcNAc...) asparagine) is linked at Asn-556.

Belongs to the acid sphingomyelinase family. Zn(2+) serves as cofactor.

It localises to the secreted. The enzyme catalyses a sphingomyelin + H2O = phosphocholine + an N-acylsphing-4-enine + H(+). It carries out the reaction an N-acyl-15-methylhexadecasphing-4-enine-1-phosphocholine + H2O = an N-acyl-15-methylhexadecasphing-4-enine + phosphocholine + H(+). The protein operates within lipid metabolism; sphingolipid metabolism. Its function is as follows. Sphingomyelin phosphodiesterase (sphingomyelinase) that converts sphingomyelin to ceramide (N-acyl-sphingoid base) and phosphocholine at acidic pH. Displays its enzymatic activity when secreted. May play distinct roles in signaling. The protein is Sphingomyelin phosphodiesterase 1 (asm-1) of Caenorhabditis elegans.